The sequence spans 331 residues: Glycerol-3-phosphate dehydrogenase [NAD(P)+] (331 aa).

Tryptophan 11, arginine 30, and lysine 105 together coordinate NADPH. Sn-glycerol 3-phosphate is bound by residues lysine 105, glycine 134, and serine 136. Position 138 (alanine 138) interacts with NADPH. 5 residues coordinate sn-glycerol 3-phosphate: lysine 189, aspartate 242, serine 252, arginine 253, and asparagine 254. Lysine 189 acts as the Proton acceptor in catalysis. Arginine 253 contacts NADPH. NADPH-binding residues include valine 277 and glutamate 279.

Belongs to the NAD-dependent glycerol-3-phosphate dehydrogenase family.

It is found in the cytoplasm. It catalyses the reaction sn-glycerol 3-phosphate + NAD(+) = dihydroxyacetone phosphate + NADH + H(+). The enzyme catalyses sn-glycerol 3-phosphate + NADP(+) = dihydroxyacetone phosphate + NADPH + H(+). The protein operates within membrane lipid metabolism; glycerophospholipid metabolism. Its function is as follows. Catalyzes the reduction of the glycolytic intermediate dihydroxyacetone phosphate (DHAP) to sn-glycerol 3-phosphate (G3P), the key precursor for phospholipid synthesis. This Janthinobacterium sp. (strain Marseille) (Minibacterium massiliensis) protein is Glycerol-3-phosphate dehydrogenase [NAD(P)+].